The chain runs to 328 residues: DNA-directed RNA polymerase subunit alpha (328 aa).

The alpha N-terminal domain (alpha-NTD) stretch occupies residues 1-233 (MHNSATEFLK…EQLEAFIDLR (233 aa)). Residues 247–328 (FDPVLLRPVD…WPPVSILKND (82 aa)) are alpha C-terminal domain (alpha-CTD).

This sequence belongs to the RNA polymerase alpha chain family. As to quaternary structure, homodimer. The RNAP catalytic core consists of 2 alpha, 1 beta, 1 beta' and 1 omega subunit. When a sigma factor is associated with the core the holoenzyme is formed, which can initiate transcription.

It carries out the reaction RNA(n) + a ribonucleoside 5'-triphosphate = RNA(n+1) + diphosphate. DNA-dependent RNA polymerase catalyzes the transcription of DNA into RNA using the four ribonucleoside triphosphates as substrates. This chain is DNA-directed RNA polymerase subunit alpha, found in Wigglesworthia glossinidia brevipalpis.